The chain runs to 294 residues: tRNA pseudouridine synthase B (294 aa).

Catalysis depends on Asp39, which acts as the Nucleophile.

This sequence belongs to the pseudouridine synthase TruB family. Type 1 subfamily.

The catalysed reaction is uridine(55) in tRNA = pseudouridine(55) in tRNA. Its function is as follows. Responsible for synthesis of pseudouridine from uracil-55 in the psi GC loop of transfer RNAs. This Streptococcus pyogenes serotype M2 (strain MGAS10270) protein is tRNA pseudouridine synthase B.